Reading from the N-terminus, the 1362-residue chain is Bromodomain-containing protein 4B (1362 aa).

6 disordered regions span residues 22–57 (EGAQ…QPKR), 200–243 (SLGD…HPPA), 274–367 (LANH…DSKT), 476–639 (DEPE…SYEE), 699–941 (CLRK…TQSP), and 953–1349 (SQAP…MNFQ). The span at 34 to 49 (QPQPQTPMMQTPPPEI) shows a compositional bias: pro residues. The Bromo 1 domain maps to 57–163 (RQTNQLQYLL…KLFLQKISEM (107 aa)). The span at 219-234 (TPTPPAVIRAPTPPQT) shows a compositional bias: pro residues. Over residues 326–342 (PRKESGRQIRPIKKTEV) the composition is skewed to basic and acidic residues. The span at 348–358 (PAPPDLHPQPA) shows a compositional bias: pro residues. A Bromo 2 domain is found at 365 to 474 (SKTSEQLRYC…DVFEMRFAKM (110 aa)). Positions 481–503 (APAPVPSPAPGPPAPSIKIPPPT) are enriched in pro residues. An NPS region region spans residues 503–521 (TSSDTSSDSSSDSESSSDS). Residues 504–516 (SSDTSSDSSSDSE) show a composition bias toward low complexity. Residues 542-597 (QLAALSQPQPNKPKKKEREKRKEKHKRKEEVEETRKGRIREPPAKKPKKSVQVSGG) form a BID region region. Over residues 553 to 568 (KPKKKEREKRKEKHKR) the composition is skewed to basic residues. The segment covering 569–585 (KEEVEETRKGRIREPPA) has biased composition (basic and acidic residues). A compositionally biased stretch (pro residues) spans 606–621 (PPPVTRPARPAPPPAP). One can recognise an NET domain in the interval 623 to 707 (ESSEEDTQRC…SCLRKKRKPQ (85 aa)). Residues 628–639 (DTQRCRPMSYEE) show a composition bias toward basic and acidic residues. Over residues 722-737 (SYSSSESESSSESSTS) the composition is skewed to low complexity. Over residues 750–766 (QKKKGHSGRESRKHHHP) the composition is skewed to basic residues. Composition is skewed to pro residues over residues 772–793 (IAPP…PPPS) and 871–889 (PARP…PHHQ). Positions 893 to 905 (HVHHHHHHHHHAQ) are enriched in basic residues. The span at 926-941 (YLQQLHKSQQPPTQSP) shows a compositional bias: polar residues. Low complexity-rich tracts occupy residues 953-963 (SQAPMAAPAQS), 977-1006 (SSAS…QPAG), 1014-1028 (QQQQ…PALQ), and 1041-1050 (HQQAKQQQVI). Residues 1061 to 1361 (RQQKQETYPG…LMEIFEQNLF (301 aa)) are C-terminal (CTD) region. A compositionally biased stretch (pro residues) spans 1086-1099 (QVPPYPGLTHPPSP). Residues 1186–1207 (PEKEKQKQEPKTPVAPKKDLKI) are compositionally biased toward basic and acidic residues. The span at 1224-1234 (PTSAGKSTSDS) shows a compositional bias: polar residues. The span at 1236-1293 (ELFRRQAREKEERERALKHQAEQAERMRREQERMRTREDDDVQDQTRKAHEEARRRQE) shows a compositional bias: basic and acidic residues. Low complexity predominate over residues 1308-1319 (PAAPSPAQSSQP). Over residues 1322-1334 (DQREMARKREQER) the composition is skewed to basic and acidic residues.

It belongs to the BET family.

It is found in the nucleus. Its subcellular location is the chromosome. Functionally, chromatin reader protein that recognizes and binds acetylated histones and plays a key role in transmission of epigenetic memory across cell divisions and transcription regulation. Remains associated with acetylated chromatin throughout the entire cell cycle and provides epigenetic memory for postmitotic G1 gene transcription by preserving acetylated chromatin status and maintaining high-order chromatin structure. During interphase, plays a key role in regulating the transcription of signal-inducible genes by associating with the P-TEFb complex and recruiting it to promoters. This is Bromodomain-containing protein 4B (brd4-b) from Xenopus laevis (African clawed frog).